The primary structure comprises 112 residues: Putative pterin-4-alpha-carbinolamine dehydratase (112 aa).

The protein belongs to the pterin-4-alpha-carbinolamine dehydratase family.

It catalyses the reaction (4aS,6R)-4a-hydroxy-L-erythro-5,6,7,8-tetrahydrobiopterin = (6R)-L-erythro-6,7-dihydrobiopterin + H2O. The protein is Putative pterin-4-alpha-carbinolamine dehydratase of Photobacterium profundum (strain SS9).